The sequence spans 432 residues: Eukaryotic translation initiation factor 3 subunit M (432 aa).

One can recognise a PCI domain in the interval 184–356 (EEEEAYQHIL…KVFLIHSVRY (173 aa)). Composition is skewed to basic and acidic residues over residues 392-401 (AQQEAERKLV) and 423-432 (QHRERNDNDD). The interval 392 to 432 (AQQEAERKLVEASTQHNNDRGNQRRGGNRGQQHRERNDNDD) is disordered.

This sequence belongs to the eIF-3 subunit M family. As to quaternary structure, component of the eukaryotic translation initiation factor 3 (eIF-3) complex.

It is found in the cytoplasm. Functionally, component of the eukaryotic translation initiation factor 3 (eIF-3) complex, which is involved in protein synthesis of a specialized repertoire of mRNAs and, together with other initiation factors, stimulates binding of mRNA and methionyl-tRNAi to the 40S ribosome. The eIF-3 complex specifically targets and initiates translation of a subset of mRNAs involved in cell proliferation. This chain is Eukaryotic translation initiation factor 3 subunit M, found in Pyricularia oryzae (strain 70-15 / ATCC MYA-4617 / FGSC 8958) (Rice blast fungus).